Consider the following 131-residue polypeptide: Insulin-like 3 (131 aa).

A signal peptide spans 1–26 (MDPHPLTWALVLLGPALALSRAPAPA). Cystine bridges form between cysteine 34–cysteine 116, cysteine 46–cysteine 129, and cysteine 115–cysteine 120. Positions 58–103 (AVAGGDRELLQWLEGQHLFHGLMASGDPMLVLAPQPPPQASGHHHH) are cleaved as a propeptide — c peptide like.

The protein belongs to the insulin family. Heterodimer of a B chain and an A chain linked by two disulfide bonds. As to expression, expressed exclusively in prenatal and postnatal Leydig cells.

Its subcellular location is the secreted. In terms of biological role, seems to play a role in testicular function. May be a trophic hormone with a role in testicular descent in fetal life. Is a ligand for LGR8 receptor. In Sus scrofa (Pig), this protein is Insulin-like 3 (INSL3).